The sequence spans 724 residues: Membrane protein YdfJ (724 aa).

Transmembrane regions (helical) follow at residues 17 to 37 (IKAICAWIVVLVAAIGLAVTL), 179 to 199 (IVGIILAFVVLAITFGSLLIA), 200 to 220 (GLPILTALIGLGVSIGLVLIG), 231 to 251 (LSLAGMIGLAVGIDYALFIFT), 277 to 297 (AVVFAGLTVIVALCGLTVVNI), 309 to 329 (LSVLMAVLASITLVPAVLSIA), 360 to 380 (IMLSVCSILILIVISIPSMHL), 512 to 532 (AIPVFAVLIVGFAFVLLTIVF), 539 to 559 (LVAVAGFMLTMTATLGICVFV), 575 to 595 (GPILAFLPILSIGILFGLAMD), 627 to 647 (PVVTAAGLIMIFVFAGFIFAG), and 655 to 675 (GLALSFGVLFDAFIVRMTLIP).

The protein belongs to the resistance-nodulation-cell division (RND) (TC 2.A.6) family. MmpL subfamily.

It is found in the cell membrane. This chain is Membrane protein YdfJ (ydfJ), found in Bacillus subtilis (strain 168).